The primary structure comprises 332 residues: Anthranilate phosphoribosyltransferase (332 aa).

Residues Gly-79, 82–83 (GD), Ser-87, 89–92 (NIST), 107–115 (KHGNRSVSS), and Ser-119 each bind 5-phospho-alpha-D-ribose 1-diphosphate. Gly-79 serves as a coordination point for anthranilate. Residue Ser-91 coordinates Mg(2+). Asn-110 lines the anthranilate pocket. Arg-165 contributes to the anthranilate binding site. Residues Asp-223 and Glu-224 each contribute to the Mg(2+) site.

This sequence belongs to the anthranilate phosphoribosyltransferase family. In terms of assembly, homodimer. It depends on Mg(2+) as a cofactor.

The catalysed reaction is N-(5-phospho-beta-D-ribosyl)anthranilate + diphosphate = 5-phospho-alpha-D-ribose 1-diphosphate + anthranilate. Its pathway is amino-acid biosynthesis; L-tryptophan biosynthesis; L-tryptophan from chorismate: step 2/5. In terms of biological role, catalyzes the transfer of the phosphoribosyl group of 5-phosphorylribose-1-pyrophosphate (PRPP) to anthranilate to yield N-(5'-phosphoribosyl)-anthranilate (PRA). In Yersinia pseudotuberculosis serotype O:3 (strain YPIII), this protein is Anthranilate phosphoribosyltransferase.